Here is a 636-residue protein sequence, read N- to C-terminus: Molybdenum cofactor biosynthesis protein 1 (636 aa).

The interval 1-383 is molybdenum cofactor biosynthesis protein A; the sequence is MAARPLSRML…QMKNRPMILI (383 aa). Serine 64 carries the post-translational modification Phosphoserine. Residues 64-277 enclose the Radical SAM core domain; the sequence is SFGRQHSYLR…LDTVRQQWPE (214 aa). Arginine 73 lines the GTP pocket. Residues cysteine 80 and cysteine 84 each contribute to the [4Fe-4S] cluster site. Tyrosine 86 contributes to the S-adenosyl-L-methionine binding site. Cysteine 87 provides a ligand contact to [4Fe-4S] cluster. Arginine 123 provides a ligand contact to GTP. Glycine 127 serves as a coordination point for S-adenosyl-L-methionine. Threonine 154 serves as a coordination point for GTP. Serine 178 provides a ligand contact to S-adenosyl-L-methionine. Position 198 is an N6-acetyllysine (lysine 198). Lysine 215 provides a ligand contact to GTP. Methionine 249 lines the S-adenosyl-L-methionine pocket. [4Fe-4S] cluster is bound by residues cysteine 312 and cysteine 315. Residue 317 to 319 coordinates GTP; it reads RLR. Position 329 (cysteine 329) interacts with [4Fe-4S] cluster. The molybdenum cofactor biosynthesis protein C stretch occupies residues 414 to 636; that stretch reads MSFSSQVATL…GGQRGDFHRA (223 aa). Positions 456–480 are disordered; sequence DANSKCLSPGSWASAAPSGPQLTSE. Over residues 463 to 475 the composition is skewed to low complexity; the sequence is SPGSWASAAPSGP. An N6-acetyllysine modification is found at lysine 528. The For molybdenum cofactor biosynthesis protein C activity role is filled by aspartate 606.

It in the C-terminal section; belongs to the MoaC family. The protein in the N-terminal section; belongs to the radical SAM superfamily. MoaA family. As to quaternary structure, isoform MOCS1A and isoform MOCS1B probably form a heterooligomer. The cofactor is [4Fe-4S] cluster. In terms of tissue distribution, isoform MOCS1A and isoform 2 are widely expressed.

It catalyses the reaction GTP + AH2 + S-adenosyl-L-methionine = (8S)-3',8-cyclo-7,8-dihydroguanosine 5'-triphosphate + 5'-deoxyadenosine + L-methionine + A + H(+). The enzyme catalyses (8S)-3',8-cyclo-7,8-dihydroguanosine 5'-triphosphate = cyclic pyranopterin phosphate + diphosphate. It participates in cofactor biosynthesis; molybdopterin biosynthesis. Isoform MOCS1A and isoform MOCS1B probably form a complex that catalyzes the conversion of 5'-GTP to cyclic pyranopterin monophosphate (cPMP). MOCS1A catalyzes the cyclization of GTP to (8S)-3',8-cyclo-7,8-dihydroguanosine 5'-triphosphate and MOCS1B catalyzes the subsequent conversion of (8S)-3',8-cyclo-7,8-dihydroguanosine 5'-triphosphate to cPMP. The protein is Molybdenum cofactor biosynthesis protein 1 (MOCS1) of Homo sapiens (Human).